A 519-amino-acid chain; its full sequence is Chaperone SurA (519 aa).

The N-terminal stretch at 1–31 (MMRSLHSLRRMSGTVLALMLAAGLPLSAAQA) is a signal peptide. Low complexity-rich tracts occupy residues 31–45 (AQPA…QKPA) and 197–207 (PAAAQATRAPA). Disordered regions lie at residues 31-50 (AQPA…PAPS) and 196-221 (NPAA…PAQS). In terms of domain architecture, PpiC 1 spans 223–324 (PAMLVLAQIL…NGFHILKVVD (102 aa)). Positions 328–361 (GGQPAQAARPAPAPAPQQPSSFQEGPSVAAPQGP) are disordered. One can recognise a PpiC 2 domain in the interval 364–463 (VTQTHARHIL…FGWHLIQVLE (100 aa)).

The protein localises to the periplasm. It carries out the reaction [protein]-peptidylproline (omega=180) = [protein]-peptidylproline (omega=0). Functionally, chaperone involved in the correct folding and assembly of outer membrane proteins. Recognizes specific patterns of aromatic residues and the orientation of their side chains, which are found more frequently in integral outer membrane proteins. May act in both early periplasmic and late outer membrane-associated steps of protein maturation. In Bordetella parapertussis (strain 12822 / ATCC BAA-587 / NCTC 13253), this protein is Chaperone SurA.